The sequence spans 788 residues: DNA ligase (788 aa).

NAD(+) contacts are provided by residues 35–39, 84–85, and glutamate 124; these read DAEYD and SL. Lysine 126 (N6-AMP-lysine intermediate) is an active-site residue. NAD(+) contacts are provided by arginine 147, glutamate 184, lysine 300, and lysine 324. Zn(2+) contacts are provided by cysteine 418, cysteine 421, cysteine 448, and cysteine 454. Residues 707–788 form the BRCT domain; that stretch reads AEGLPLAGQT…FIERLAQLGS (82 aa).

This sequence belongs to the NAD-dependent DNA ligase family. LigA subfamily. Requires Mg(2+) as cofactor. The cofactor is Mn(2+).

The enzyme catalyses NAD(+) + (deoxyribonucleotide)n-3'-hydroxyl + 5'-phospho-(deoxyribonucleotide)m = (deoxyribonucleotide)n+m + AMP + beta-nicotinamide D-nucleotide.. Its function is as follows. DNA ligase that catalyzes the formation of phosphodiester linkages between 5'-phosphoryl and 3'-hydroxyl groups in double-stranded DNA using NAD as a coenzyme and as the energy source for the reaction. It is essential for DNA replication and repair of damaged DNA. This is DNA ligase from Stutzerimonas stutzeri (strain A1501) (Pseudomonas stutzeri).